Consider the following 1413-residue polypeptide: DNA-directed RNA polymerase subunit beta' (1413 aa).

Zn(2+)-binding residues include Cys-70, Cys-72, Cys-85, and Cys-88. The Mg(2+) site is built by Asp-460, Asp-462, and Asp-464. Residues Cys-819, Cys-893, Cys-900, and Cys-903 each contribute to the Zn(2+) site. The disordered stretch occupies residues Glu-1392 to Glu-1413.

The protein belongs to the RNA polymerase beta' chain family. In terms of assembly, the RNAP catalytic core consists of 2 alpha, 1 beta, 1 beta' and 1 omega subunit. When a sigma factor is associated with the core the holoenzyme is formed, which can initiate transcription. It depends on Mg(2+) as a cofactor. Zn(2+) serves as cofactor.

It carries out the reaction RNA(n) + a ribonucleoside 5'-triphosphate = RNA(n+1) + diphosphate. DNA-dependent RNA polymerase catalyzes the transcription of DNA into RNA using the four ribonucleoside triphosphates as substrates. This chain is DNA-directed RNA polymerase subunit beta', found in Burkholderia cenocepacia (strain ATCC BAA-245 / DSM 16553 / LMG 16656 / NCTC 13227 / J2315 / CF5610) (Burkholderia cepacia (strain J2315)).